We begin with the raw amino-acid sequence, 393 residues long: Enoyl-[acyl-carrier-protein] reductase [NADH] (393 aa).

NAD(+) is bound by residues 48-53 (GSSTGY), 74-75 (FE), 111-112 (DA), and 139-140 (LA). A substrate-binding site is contributed by Tyr225. Residue Tyr235 is the Proton donor of the active site. NAD(+) contacts are provided by residues Lys244 and 273 to 275 (LVT).

This sequence belongs to the TER reductase family. As to quaternary structure, monomer.

It catalyses the reaction a 2,3-saturated acyl-[ACP] + NAD(+) = a (2E)-enoyl-[ACP] + NADH + H(+). Its pathway is lipid metabolism; fatty acid biosynthesis. Involved in the final reduction of the elongation cycle of fatty acid synthesis (FAS II). Catalyzes the reduction of a carbon-carbon double bond in an enoyl moiety that is covalently linked to an acyl carrier protein (ACP). The chain is Enoyl-[acyl-carrier-protein] reductase [NADH] from Pseudoalteromonas atlantica (strain T6c / ATCC BAA-1087).